The chain runs to 358 residues: Uroporphyrinogen decarboxylase (358 aa).

Substrate is bound by residues R36–R40, D85, Y160, S215, and H338.

This sequence belongs to the uroporphyrinogen decarboxylase family. As to quaternary structure, homodimer.

Its subcellular location is the cytoplasm. It carries out the reaction uroporphyrinogen III + 4 H(+) = coproporphyrinogen III + 4 CO2. The protein operates within porphyrin-containing compound metabolism; protoporphyrin-IX biosynthesis; coproporphyrinogen-III from 5-aminolevulinate: step 4/4. Catalyzes the decarboxylation of four acetate groups of uroporphyrinogen-III to yield coproporphyrinogen-III. The polypeptide is Uroporphyrinogen decarboxylase (Corynebacterium glutamicum (strain R)).